The sequence spans 373 residues: MPTPSHLKNPLCFDFRAARRVPETHAWPGLDDHPVVDGGGGGGEDAVPVVDVGAGDAAARVARAAEQWGAFLLVGHGVPAALLSRVEERVARVFSLPASEKMRAVRGPGEPCGYGSPPISSFFSKLMWSEGYTFSPSSLRSELRRLWPKSGDDYLLFCDVMEEFHKEMRRLADELLRLFLRALGLTGEEVAGVEAERRIGERMTATVHLNWYPRCPEPRRALGLIAHTDSGFFTFVLQSLVPGLQLFRRGPDRWVAVPAVAGAFVVNVGDLFHILTNGRFHSVYHRAVVNRDRDRVSLGYFLGPPPDAEVAPLPEAVPAGRSPAYRAVTWPEYMAVRKKAFATGGSALKMVSTDAAAAADEHDDVAAAADVHA.

Residues 203 to 304 (MTATVHLNWY…RVSLGYFLGP (102 aa)) form the Fe2OG dioxygenase domain. Y212 provides a ligand contact to 2-oxoglutarate. Positions 227, 229, and 285 each coordinate Fe cation. R295 and S297 together coordinate 2-oxoglutarate.

It belongs to the iron/ascorbate-dependent oxidoreductase family. Requires L-ascorbate as cofactor. It depends on Fe(2+) as a cofactor. As to expression, highly expressed in elongating leaves. Expressed in unopened flowers. Expressed at low levels in leaf blades, shoots, rachis, stems and young panicles.

The enzyme catalyses gibberellin A20 + 2-oxoglutarate + O2 = gibberellin A1 + succinate + CO2. The protein operates within plant hormone biosynthesis; gibberellin biosynthesis. Catalyzes the 3-beta-hydroxylation of the inactive gibberellin precursors, leading to the formation of bioactive gibberellins. In vitro, converts the precursors GA20, GA5, GA44 and GA9 to the corresponding 3-beta-hydroxylated active products GA1, GA3, GA38 and GA4, respectively. Involved in the production of bioactive GA for vegetative growth and development. Controls the elongation of the vegetative shoot and plant height by the regulation of active gibberellin levels. The chain is Gibberellin 3-beta-dioxygenase 2 from Oryza sativa subsp. japonica (Rice).